Here is a 1475-residue protein sequence, read N- to C-terminus: ABC transporter G family member 15 (1475 aa).

The span at 1-10 (MDSNENKKNG) shows a compositional bias: basic and acidic residues. Disordered stretches follow at residues 1–40 (MDSNENKKNGGDSLELNIINNNNDNNNNNDNNNNSTEEHI) and 75–94 (NIKNDIEAPPSGEFEPGGGA). Residues 17–34 (NIINNNNDNNNNNDNNNN) are compositionally biased toward low complexity. A coiled-coil region spans residues 25–67 (NNNNNDNNNNSTEEHIESVEQSIKEFNNVANELETEFRDYLVE). Positions 155 to 404 (LNVKNWFKKS…FIDMGFECEP (250 aa)) constitute an ABC transporter 1 domain. Residues 507-753 (WGDKFSLISR…FTGERYLEKS (247 aa)) enclose the ABC transmembrane type-2 1 domain. 5 helical membrane passes run 596–616 (IPIIMIQVFLFSIVTYFMFGL), 623–641 (FFINCFTLIGFTLATNNLY), 653–673 (IGQNIMNVLFLTMMTFTSYII), 680–699 (VWFGWYHYCNPFSFAFRALM), and 770–790 (ICIVYGFWILFIICNCIVLNI). An ABC transporter 2 domain is found at 842 to 1087 (FTWQHMYYSV…LTSYFQRHGV (246 aa)). ATP is bound at residue 879–886 (GSSGAGKT). Transmembrane regions (helical) follow at residues 1180-1200 (GYSYGTFIQSALVGLINGWTF), 1216-1236 (FIFNVTMLGILLMFLVLPQFI), 1256-1276 (FALSIIVVELPFVLVSGTIFF), 1293-1313 (FFFWLIFMLFLFYCVGFGQAI), 1323-1343 (ALNLLPVLIIFLFLFCGVLVI), and 1449-1469 (FGIIAGYFVLNIFLVVLFVFL). Positions 1180–1404 (GYSYGTFIQS…TCSDYAFEFL (225 aa)) constitute an ABC transmembrane type-2 2 domain.

Belongs to the ABC transporter superfamily. ABCG family. PDR (TC 3.A.1.205) subfamily.

The protein localises to the membrane. This chain is ABC transporter G family member 15 (abcG15), found in Dictyostelium discoideum (Social amoeba).